A 157-amino-acid polypeptide reads, in one-letter code: Ribosomal RNA large subunit methyltransferase H (157 aa).

Residues leucine 73, glycine 105, and 124–129 contribute to the S-adenosyl-L-methionine site; that span reads LSRMTF.

This sequence belongs to the RNA methyltransferase RlmH family. In terms of assembly, homodimer.

It is found in the cytoplasm. The enzyme catalyses pseudouridine(1915) in 23S rRNA + S-adenosyl-L-methionine = N(3)-methylpseudouridine(1915) in 23S rRNA + S-adenosyl-L-homocysteine + H(+). In terms of biological role, specifically methylates the pseudouridine at position 1915 (m3Psi1915) in 23S rRNA. In Porphyromonas gingivalis (strain ATCC BAA-308 / W83), this protein is Ribosomal RNA large subunit methyltransferase H.